We begin with the raw amino-acid sequence, 394 residues long: S-adenosylmethionine synthase 1 (394 aa).

Glu-11 provides a ligand contact to Mg(2+). His-17 contacts ATP. Glu-45 provides a ligand contact to K(+). 2 residues coordinate L-methionine: Glu-58 and Gln-101. ATP-binding positions include 169–171, 237–240, Asp-248, 254–255, Ala-271, Lys-275, and Lys-279; these read DGK, SGRF, and RK. Position 248 (Asp-248) interacts with L-methionine. Lys-279 is a binding site for L-methionine.

The protein belongs to the AdoMet synthase family. As to quaternary structure, homotetramer. Mn(2+) is required as a cofactor. Requires Mg(2+) as cofactor. The cofactor is Co(2+). K(+) serves as cofactor.

The protein localises to the cytoplasm. It catalyses the reaction L-methionine + ATP + H2O = S-adenosyl-L-methionine + phosphate + diphosphate. It functions in the pathway amino-acid biosynthesis; S-adenosyl-L-methionine biosynthesis; S-adenosyl-L-methionine from L-methionine: step 1/1. Its function is as follows. Catalyzes the formation of S-adenosylmethionine from methionine and ATP. The reaction comprises two steps that are both catalyzed by the same enzyme: formation of S-adenosylmethionine (AdoMet) and triphosphate, and subsequent hydrolysis of the triphosphate. The chain is S-adenosylmethionine synthase 1 (SAM1) from Hordeum vulgare (Barley).